The primary structure comprises 346 residues: MSPYISPLFSITMIMSVMLISSSGHWVFMWLGLELGTLAFIPILVWWHSSLEVEATVKYFIVQAMAAAVFFLGGMVSLSGDFMGGVNQLMGNIGDMMIMLAVVTKLGLAPFHYWVVDVVQGLNYIPGAVLLTWQKVPGLAVLTQLATCNNSSMLLLFGMVSALVGGLGGLGQTQMRKLLAFSSISHLGWLVVGCVAGSLLGLSYFTLYVILSIPLFSILHMLNGGHLNQLRTGLMFNPLMSVLLGVGFLSLGGLPPFFGFFGKWLLLTHFVGQLLLGVSVVLITGTLISLFYYLRVSYLCIVVLGPQQIMSGLNWRKMQLSGLMSGLLVLNMLGLFLVGGASCLPK.

Transmembrane regions (helical) follow at residues 1–21, 26–46, 60–80, 96–116, 122–142, 151–171, 178–198, 199–219, 242–262, 274–294, and 320–340; these read MSPYISPLFSITMIMSVMLIS, WVFMWLGLELGTLAFIPILVW, FIVQAMAAAVFFLGGMVSLSG, MMIMLAVVTKLGLAPFHYWVV, LNYIPGAVLLTWQKVPGLAVL, SSMLLLFGMVSALVGGLGGLG, LLAFSSISHLGWLVVGCVAGS, LLGLSYFTLYVILSIPLFSIL, VLLGVGFLSLGGLPPFFGFFG, LLLGVSVVLITGTLISLFYYL, and LSGLMSGLLVLNMLGLFLVGG.

The protein belongs to the complex I subunit 2 family.

It is found in the mitochondrion inner membrane. The catalysed reaction is a ubiquinone + NADH + 5 H(+)(in) = a ubiquinol + NAD(+) + 4 H(+)(out). In terms of biological role, core subunit of the mitochondrial membrane respiratory chain NADH dehydrogenase (Complex I) that is believed to belong to the minimal assembly required for catalysis. Complex I functions in the transfer of electrons from NADH to the respiratory chain. The immediate electron acceptor for the enzyme is believed to be ubiquinone. This chain is NADH-ubiquinone oxidoreductase chain 2 (ND2), found in Branchiostoma lanceolatum (Common lancelet).